The chain runs to 179 residues: NADH:FAD oxidoreductase (179 aa).

T48–A51 is an FAD binding site. NAD(+) is bound at residue S54–D57. FAD contacts are provided by residues C65 to Y71, A99, V104 to R109, and S144. NAD(+) contacts are provided by residues H145 and Y166 to R169. Position 166 (Y166) interacts with FAD.

The protein belongs to the non-flavoprotein flavin reductase family. As to quaternary structure, homodimer. The chlorophenol-4-monooxygenase is composed of an oxygenase component TftD and a reductase component TftC.

It catalyses the reaction FADH2 + NAD(+) = FAD + NADH + 2 H(+). It functions in the pathway xenobiotic degradation. Reductase component of a two-component system that degrades 2,4,5-trichlorophenol. TftC provides the FADH(2) required by TftD. TftD oxidizes 2,4,5-trichlorophenol (2,4,5-TCP) to 2,5-dichloro-p-benzoquinone, which is chemically reduced to 2,5-dichloro-p-hydroquinone (2,5-DiCHQ). Then, TftD oxidizes the latter to 5-chloro-2-hydroxy-p-benzoquinone. The sequence is that of NADH:FAD oxidoreductase (tftC) from Burkholderia cepacia (Pseudomonas cepacia).